The following is a 307-amino-acid chain: tRNA pseudouridine synthase B (307 aa).

Asp38 functions as the Nucleophile in the catalytic mechanism.

Belongs to the pseudouridine synthase TruB family. Type 1 subfamily.

The enzyme catalyses uridine(55) in tRNA = pseudouridine(55) in tRNA. In terms of biological role, responsible for synthesis of pseudouridine from uracil-55 in the psi GC loop of transfer RNAs. In Lachnoclostridium phytofermentans (strain ATCC 700394 / DSM 18823 / ISDg) (Clostridium phytofermentans), this protein is tRNA pseudouridine synthase B.